The following is a 541-amino-acid chain: Neutral amino acid transporter B(0) (541 aa).

Met1 carries the post-translational modification N-acetylmethionine. The Cytoplasmic segment spans residues 1 to 51 (MVADPPRDSKGLAAAEPTANGGLALASIEDQGAAAGGYCGSRDQVRRCLRA). A helical membrane pass occupies residues 52-81 (NLLVLLTVVAVVAGVALGLGVSGAGGALAL). At 82–94 (GPERLSAFVFPGE) the chain is on the extracellular side. A helical transmembrane segment spans residues 95 to 116 (LLLRLLRMIILPLVVCSLIGGA). Residues 117 to 130 (ASLDPGALGRLGAW) lie on the Cytoplasmic side of the membrane. A helical membrane pass occupies residues 131-153 (ALLFFLVTTLLASALGVGLALAL). The Extracellular portion of the chain corresponds to 154–224 (QPGAASAAIN…GTRVKVPVGQ (71 aa)). Residues Asn163 and Asn212 are each glycosylated (N-linked (GlcNAc...) asparagine). A helical membrane pass occupies residues 225 to 248 (EVEGMNILGLVVFAIVFGVALRKL). The Cytoplasmic segment spans residues 249 to 257 (GPEGELLIR). The helical transmembrane segment at 258 to 285 (FFNSFNEATMVLVSWIMWYAPVGIMFLV) threads the bilayer. Residues 286 to 306 (AGKIVEMEDVGLLFARLGKYI) lie on the Extracellular side of the membrane. Residues 307 to 328 (LCCLLGHAIHGLLVLPLIYFLF) traverse the membrane as a helical segment. Residues 329–333 (TRKNP) lie on the Cytoplasmic side of the membrane. The segment at residues 334-364 (YRFLWGIVTPLATAFGTSSSSATLPLMMKCV) is an intramembrane region (discontinuously helical). Residues 365–373 (EENNGVAKH) are Cytoplasmic-facing. A helical membrane pass occupies residues 374–400 (ISRFILPIGATVNMDGAALFQCVAAVF). Na(+) is bound by residues Gly382, Thr384, and Asn386. At 401–413 (IAQLSQQSLDFVK) the chain is on the extracellular side. The segment at residues 414–447 (IITILVTATASSVGAAGIPAGGVLTLAIILEAVN) is an intramembrane region (discontinuously helical). The Extracellular portion of the chain corresponds to 448–460 (LPVDHISLILAVD). A helical membrane pass occupies residues 461–482 (WLVDRSCTVLNVEGDALGAGLL). Na(+) is bound by residues Asn471 and Asp475. Residues 483 to 541 (QNYVDRTESRSTEPELIQVKSELPLDPLPVPTEEGNPLLKHYRGPAGDATVASEKESVM) lie on the Cytoplasmic side of the membrane. At Ser493 the chain carries Phosphoserine. Position 494 is a phosphothreonine (Thr494). A phosphoserine mark is found at Ser503, Ser535, and Ser539. Residues 511-541 (PVPTEEGNPLLKHYRGPAGDATVASEKESVM) are disordered.

Belongs to the dicarboxylate/amino acid:cation symporter (DAACS) (TC 2.A.23) family. SLC1A5 subfamily. In terms of assembly, homotrimer. Interacts with ERVH48-1/suppressyn; may negatively regulate syncytialization. Placenta, lung, skeletal muscle, kidney, pancreas, and intestine. Expressed in CD34-positive hematopoietic progenitors (at protein level).

The protein localises to the cell membrane. It localises to the melanosome. It catalyses the reaction L-glutamine(out) + L-serine(in) + Na(+)(out) = L-glutamine(in) + L-serine(out) + Na(+)(in). The enzyme catalyses L-glutamine(in) + L-serine(out) + Na(+)(out) = L-glutamine(out) + L-serine(in) + Na(+)(in). It carries out the reaction L-threonine(in) + L-glutamine(out) + Na(+)(out) = L-threonine(out) + L-glutamine(in) + Na(+)(in). The catalysed reaction is L-threonine(out) + L-glutamine(in) + Na(+)(out) = L-threonine(in) + L-glutamine(out) + Na(+)(in). It catalyses the reaction L-asparagine(in) + L-glutamine(out) + Na(+)(out) = L-asparagine(out) + L-glutamine(in) + Na(+)(in). The enzyme catalyses L-asparagine(out) + L-glutamine(in) + Na(+)(out) = L-asparagine(in) + L-glutamine(out) + Na(+)(in). It carries out the reaction L-glutamine(in) + L-alanine(out) + Na(+)(out) = L-glutamine(out) + L-alanine(in) + Na(+)(in). The catalysed reaction is L-valine(out) + L-glutamine(in) + Na(+)(out) = L-valine(in) + L-glutamine(out) + Na(+)(in). It catalyses the reaction L-glutamine(in) + L-methionine(out) + Na(+)(out) = L-glutamine(out) + L-methionine(in) + Na(+)(in). The enzyme catalyses L-glutamine(in) + L-glutamate(out) + Na(+)(out) + H(+)(out) = L-glutamine(out) + L-glutamate(in) + Na(+)(in) + H(+)(in). It carries out the reaction D-serine(in) + L-glutamine(out) + Na(+)(out) = D-serine(out) + L-glutamine(in) + Na(+)(in). The catalysed reaction is D-serine(in) + L-alanine(out) + Na(+)(out) = D-serine(out) + L-alanine(in) + Na(+)(in). It catalyses the reaction nitrate(in) = nitrate(out). The enzyme catalyses iodide(out) = iodide(in). It carries out the reaction thiocyanate(in) = thiocyanate(out). Regulated by L-cysteine, which can either inhibit substrate influx or trigger substrate efflux without being transported itself. Functionally, sodium-coupled antiporter of neutral amino acids. In a tri-substrate transport cycle, exchanges neutral amino acids between the extracellular and intracellular compartments, coupled to the inward cotransport of at least one sodium ion. The preferred substrate is the essential amino acid L-glutamine, a precursor for biosynthesis of proteins, nucleotides and amine sugars as well as an alternative fuel for mitochondrial oxidative phosphorylation. Exchanges L-glutamine with other neutral amino acids such as L-serine, L-threonine and L-asparagine in a bidirectional way. Provides L-glutamine to proliferating stem and activated cells driving the metabolic switch toward cell differentiation. The transport cycle is usually pH-independent, with the exception of L-glutamate. Transports extracellular L-glutamate coupled to the cotransport of one proton and one sodium ion in exchange for intracellular L-glutamine counter-ion. May provide for L-glutamate uptake in glial cells regulating glutamine/glutamate cycle in the nervous system. Can transport D-amino acids. Mediates D-serine release from the retinal glia potentially affecting NMDA receptor function in retinal neurons. Displays sodium- and amino acid-dependent but uncoupled channel-like anion conductance with a preference SCN(-) &gt;&gt; NO3(-) &gt; I(-) &gt; Cl(-). Through binding of the fusogenic protein syncytin-1/ERVW-1 may mediate trophoblasts syncytialization, the spontaneous fusion of their plasma membranes, an essential process in placental development. (Microbial infection) Acts as a cell surface receptor for Feline endogenous virus RD114. Its function is as follows. (Microbial infection) Acts as a cell surface receptor for Baboon M7 endogenous virus. In terms of biological role, (Microbial infection) Acts as a cell surface receptor for type D simian retroviruses. The chain is Neutral amino acid transporter B(0) from Homo sapiens (Human).